The primary structure comprises 122 residues: NLWQFENMIMKVAKKSGILSYSAYGCYCGWGGRGTPKDATDRCCFVHDCCYGKVTGCNPKLGKYTYSSENGDIICGGDGPCKEVCECDRAAAICFRDNLDTYDRKTYWKYPASNCQEDSEPC.

7 disulfides stabilise this stretch: cysteine 26–cysteine 115, cysteine 28–cysteine 44, cysteine 43–cysteine 94, cysteine 49–cysteine 122, cysteine 50–cysteine 87, cysteine 57–cysteine 81, and cysteine 75–cysteine 85. Positions 27, 29, and 31 each coordinate Ca(2+). Histidine 47 is a catalytic residue. Aspartate 48 lines the Ca(2+) pocket. Residue aspartate 88 is part of the active site.

It belongs to the phospholipase A2 family. Group II subfamily. D49 sub-subfamily. In terms of assembly, homodimer. It depends on Ca(2+) as a cofactor. As to expression, expressed by the venom gland.

It localises to the secreted. It carries out the reaction a 1,2-diacyl-sn-glycero-3-phosphocholine + H2O = a 1-acyl-sn-glycero-3-phosphocholine + a fatty acid + H(+). Functionally, PLA2 catalyzes the calcium-dependent hydrolysis of the 2-acyl groups in 3-sn-phosphoglycerides. In Protobothrops mucrosquamatus (Taiwan habu), this protein is Acidic phospholipase A2 1.